The following is a 283-amino-acid chain: 2-hydroxy-6-oxononadienedioate/2-hydroxy-6-oxononatrienedioate hydrolase (283 aa).

The AB hydrolase-1 domain maps to 35–269 (VVVMFHGSGP…KCGHWAQWEH (235 aa)). Histidine 263 serves as the catalytic Proton acceptor.

Belongs to the AB hydrolase superfamily. MhpC family. Homodimer.

It carries out the reaction (2Z,4E)-2-hydroxy-6-oxonona-2,4-dienedioate + H2O = (2Z)-2-hydroxypenta-2,4-dienoate + succinate + H(+). It catalyses the reaction (2Z,4E,7E)-2-hydroxy-6-oxonona-2,4,7-trienedioate + H2O = (2Z)-2-hydroxypenta-2,4-dienoate + fumarate + H(+). It participates in aromatic compound metabolism; 3-phenylpropanoate degradation. In terms of biological role, catalyzes the cleavage of the C5-C6 bond of 2-hydroxy-6-oxononadienedioate and 2-hydroxy-6-oxononatrienedioate, a dienol ring fission product of the bacterial meta-cleavage pathway for degradation of phenylpropionic acid. In Pseudomonas sp, this protein is 2-hydroxy-6-oxononadienedioate/2-hydroxy-6-oxononatrienedioate hydrolase.